The sequence spans 244 residues: UPF0173 metal-dependent hydrolase RoseRS_3945 (244 aa).

This sequence belongs to the UPF0173 family.

This Roseiflexus sp. (strain RS-1) protein is UPF0173 metal-dependent hydrolase RoseRS_3945.